A 325-amino-acid chain; its full sequence is Ribosomal RNA small subunit methyltransferase H (325 aa).

Residues 41-43 (GGH), Asp60, Tyr87, Asp108, and Gln115 contribute to the S-adenosyl-L-methionine site. The tract at residues 295 to 325 (DDDEKAANPRAAPVRLRAAERTRASEDRRGS) is disordered. The span at 311–325 (RAAERTRASEDRRGS) shows a compositional bias: basic and acidic residues.

This sequence belongs to the methyltransferase superfamily. RsmH family.

Its subcellular location is the cytoplasm. It carries out the reaction cytidine(1402) in 16S rRNA + S-adenosyl-L-methionine = N(4)-methylcytidine(1402) in 16S rRNA + S-adenosyl-L-homocysteine + H(+). Its function is as follows. Specifically methylates the N4 position of cytidine in position 1402 (C1402) of 16S rRNA. This Leifsonia xyli subsp. xyli (strain CTCB07) protein is Ribosomal RNA small subunit methyltransferase H.